Reading from the N-terminus, the 117-residue chain is Peptidyl-tRNA hydrolase (117 aa).

This sequence belongs to the PTH2 family.

The protein resides in the cytoplasm. The enzyme catalyses an N-acyl-L-alpha-aminoacyl-tRNA + H2O = an N-acyl-L-amino acid + a tRNA + H(+). The natural substrate for this enzyme may be peptidyl-tRNAs which drop off the ribosome during protein synthesis. In Thermoplasma volcanium (strain ATCC 51530 / DSM 4299 / JCM 9571 / NBRC 15438 / GSS1), this protein is Peptidyl-tRNA hydrolase.